The chain runs to 122 residues: Large ribosomal subunit protein uL14c (122 aa).

This sequence belongs to the universal ribosomal protein uL14 family. Part of the 50S ribosomal subunit.

It localises to the plastid. Its subcellular location is the chloroplast. Functionally, binds to 23S rRNA. The chain is Large ribosomal subunit protein uL14c from Vitis vinifera (Grape).